The sequence spans 664 residues: MSSIVRNSDDDPLVIAIQQPRIAIESVSPVVEEGAYPAKTESDRDLRLAARIFADGHEVLGAEVVWRRVGETAERRLPLLPEGNDFWSAQLRTPPCGRLYFRIEAWIDRFAGYRRELRAKHGARLPLDLELREGDELLQRCAERGGPEIAAACAPLAERLQACQSVEERVALWLAAQTGELLRLVGPREHLVRSREYPVEVERPLARFASWYELFPRSESGDPTRHGTFDDVIRRLPQIAAMGFDVLYFPPIHPIGRTHRKGRNNSLRAEAGDPGSPYAIGSEEGGHEAIHPELGDREDFRRLLVAVREHGMELALDFAIQCSPDHPWLREHPGWFAWRPDGSLRYAENPPKKYEDIVNVDFYAEQALPSLWEALRDVVLGWVEQGVTLFRVDNPHTKPLPFWEWLIAEVRGRHPQVIFLSEAFTRPAMMARLGKVGFSQSYTYFTWRNDKQELAEYFAELNQPPWRDCYRPNFFVNTPDINPWFLQRSGRPGFLIRAALATMGSGLWGMYSGFELCEAAALPGKEEYLDSEKYQLRPRDYQAPGNIVAEIARLNRIRRENPALQTHLGFQAYNAWNDRILYFGKRTADLANFVLVAVCLDPHEAQEAHFELPLWEFGLPDDASLQGEDLMNGHRWVWHGKVQWMRIEPWHLPFGIWRVRRVDA.

Positions 261, 321, and 356 each coordinate alpha-maltose 1-phosphate. Asp393 serves as the catalytic Nucleophile. Asn394 serves as a coordination point for alpha-maltose 1-phosphate. Glu422 functions as the Proton donor in the catalytic mechanism. An alpha-maltose 1-phosphate-binding site is contributed by 533 to 534; it reads KY.

This sequence belongs to the glycosyl hydrolase 13 family. GlgE subfamily. As to quaternary structure, homodimer.

The catalysed reaction is alpha-maltose 1-phosphate + [(1-&gt;4)-alpha-D-glucosyl](n) = [(1-&gt;4)-alpha-D-glucosyl](n+2) + phosphate. Maltosyltransferase that uses maltose 1-phosphate (M1P) as the sugar donor to elongate linear or branched alpha-(1-&gt;4)-glucans. Is involved in a branched alpha-glucan biosynthetic pathway from trehalose, together with TreS, Mak and GlgB. This chain is Alpha-1,4-glucan:maltose-1-phosphate maltosyltransferase, found in Pseudomonas aeruginosa (strain ATCC 15692 / DSM 22644 / CIP 104116 / JCM 14847 / LMG 12228 / 1C / PRS 101 / PAO1).